Reading from the N-terminus, the 427-residue chain is Serine hydroxymethyltransferase (427 aa).

Residues leucine 122 and 126–128 contribute to the (6S)-5,6,7,8-tetrahydrofolate site; that span reads GHL. N6-(pyridoxal phosphate)lysine is present on lysine 231. Residues glutamate 247 and 355–357 contribute to the (6S)-5,6,7,8-tetrahydrofolate site; that span reads SPF.

Belongs to the SHMT family. As to quaternary structure, homodimer. Pyridoxal 5'-phosphate is required as a cofactor.

It localises to the cytoplasm. The catalysed reaction is (6R)-5,10-methylene-5,6,7,8-tetrahydrofolate + glycine + H2O = (6S)-5,6,7,8-tetrahydrofolate + L-serine. Its pathway is one-carbon metabolism; tetrahydrofolate interconversion. The protein operates within amino-acid biosynthesis; glycine biosynthesis; glycine from L-serine: step 1/1. Functionally, catalyzes the reversible interconversion of serine and glycine with tetrahydrofolate (THF) serving as the one-carbon carrier. This reaction serves as the major source of one-carbon groups required for the biosynthesis of purines, thymidylate, methionine, and other important biomolecules. Also exhibits THF-independent aldolase activity toward beta-hydroxyamino acids, producing glycine and aldehydes, via a retro-aldol mechanism. The polypeptide is Serine hydroxymethyltransferase (Microcystis aeruginosa (strain NIES-843 / IAM M-2473)).